Here is a 75-residue protein sequence, read N- to C-terminus: Large ribosomal subunit protein bL31 (75 aa).

This sequence belongs to the bacterial ribosomal protein bL31 family. Type A subfamily. Part of the 50S ribosomal subunit.

Its function is as follows. Binds the 23S rRNA. The chain is Large ribosomal subunit protein bL31 from Chlorobium limicola (strain DSM 245 / NBRC 103803 / 6330).